The primary structure comprises 265 residues: Reduced viability upon starvation protein 161 (265 aa).

A BAR domain is found at 15–239; it reads HSVIIKNVDK…LDQQSRDDYA (225 aa). Positions 126–193 form a coiled coil; it reads YFKEIEEAIK…NQLKTELPQL (68 aa).

It localises to the cytoplasm. The protein localises to the cytoskeleton. Its function is as follows. Component of a cytoskeletal structure that is required for the formation of endocytic vesicles at the plasma membrane level. The chain is Reduced viability upon starvation protein 161 (RVS161) from Saccharomyces cerevisiae (strain ATCC 204508 / S288c) (Baker's yeast).